The primary structure comprises 643 residues: Protein ecdysoneless homolog (643 aa).

Disordered stretches follow at residues Glu-428–Asp-458 and Ile-501–Val-600. The segment covering Ala-446 to Asn-456 has biased composition (polar residues). Over residues Met-528–Asn-543 the composition is skewed to acidic residues. The span at Asn-564–Ser-580 shows a compositional bias: polar residues. A compositionally biased stretch (basic and acidic residues) spans Lys-581–Glu-592.

It belongs to the ECD family.

This chain is Protein ecdysoneless homolog, found in Arabidopsis thaliana (Mouse-ear cress).